The following is a 534-amino-acid chain: Alkaline serine exoprotease A (534 aa).

The N-terminal stretch at methionine 1–alanine 21 is a signal peptide. Residues phenylalanine 22–aspartate 141 constitute a propeptide that is removed on maturation. An Inhibitor I9 domain is found at arginine 57–leucine 134. Residues isoleucine 148 to aspartate 419 enclose the Peptidase S8 domain. Active-site charge relay system residues include aspartate 180, histidine 213, and serine 363. The tract at residues aspartate 423–proline 442 is disordered.

The protein belongs to the peptidase S8 family.

The chain is Alkaline serine exoprotease A (proA) from Vibrio alginolyticus.